The primary structure comprises 162 residues: MRILKPHLRSTSIQCYLCLLLNSHFLTEAGIHVFILGCISAGLPKTEANWQFVIRDLEKIDNIIQSIHIDTTLYTESDAHPSCKVTAMKCFLLELRVISLEFKHHVLNETVENLIFLANDRLSSNGDITETGCKECEELEEKNIKEFLQSFVHIVQMFINTS.

An N-terminal signal peptide occupies residues 1–29 (MRILKPHLRSTSIQCYLCLLLNSHFLTEA). Residues 30-48 (GIHVFILGCISAGLPKTEA) constitute a propeptide that is removed on maturation. 2 disulfide bridges follow: cysteine 83-cysteine 133 and cysteine 90-cysteine 136. N-linked (GlcNAc...) asparagine glycosylation occurs at asparagine 108.

Belongs to the IL-15/IL-21 family.

The protein resides in the secreted. Its function is as follows. Cytokine that plays a major role in the development of inflammatory and protective immune responses to microbial invaders and parasites by modulating immune cells of both the innate and adaptive immune systems. Stimulates the proliferation of natural killer cells, T-cells and B-cells and promotes the secretion of several cytokines. In monocytes, induces the production of IL8 and monocyte chemotactic protein 1/CCL2, two chemokines that attract neutrophils and monocytes respectively to sites of infection. Unlike most cytokines, which are secreted in soluble form, IL15 is expressed in association with its high affinity IL15RA on the surface of IL15-producing cells and delivers signals to target cells that express IL2RB and IL2RG receptor subunits. Binding to its receptor triggers the phosphorylation of JAK1 and JAK3 and the recruitment and subsequent phosphorylation of signal transducer and activator of transcription-3/STAT3 and STAT5. In mast cells, induces the rapid tyrosine phosphorylation of STAT6 and thereby controls mast cell survival and release of cytokines such as IL4. This Ailuropoda melanoleuca (Giant panda) protein is Interleukin-15 (IL15).